The following is a 120-amino-acid chain: uncharacterized protein (120 aa).

Positions 7–120 constitute an HIT domain; that stretch reads VFAKIITKNL…KLIGLINNND (114 aa). Residues 101–105 carry the Histidine triad motif motif; the sequence is HFHFH.

This is an uncharacterized protein from Rickettsia prowazekii (strain Madrid E).